Here is a 688-residue protein sequence, read N- to C-terminus: Zinc finger and BTB domain-containing protein 48 (688 aa).

The 64-residue stretch at 26–89 folds into the BTB domain; sequence CDATLDVGGL…FYTGHLALTS (64 aa). The segment at 119–140 is disordered; it reads SVGQAAGGQSGLGPPASQNVNS. Lysine 143 is covalently cross-linked (Glycyl lysine isopeptide (Lys-Gly) (interchain with G-Cter in SUMO2)). A disordered region spans residues 161 to 192; it reads PRDQEPRGSHSPQRPQLHSPAQSEGPSSLCGK. Residues serine 169, serine 171, and serine 179 each carry the phosphoserine modification. Over residues 170-186 the composition is skewed to polar residues; that stretch reads HSPQRPQLHSPAQSEGP. Residue lysine 263 forms a Glycyl lysine isopeptide (Lys-Gly) (interchain with G-Cter in SUMO2) linkage. A C2H2-type 1 zinc finger spans residues 291–313; the sequence is VECPTCHKKFLSKYYLKVHNRKH. The Zn(2+) site is built by cysteine 293, cysteine 296, histidine 309, histidine 313, cysteine 321, cysteine 324, histidine 337, cysteine 342, cysteine 352, cysteine 355, histidine 368, histidine 372, cysteine 380, cysteine 383, histidine 396, and histidine 401. The CCHC-type zinc finger occupies 319-344; sequence FECPKCGKCYFRKENLLEHEARNCMN. 9 consecutive C2H2-type zinc fingers follow at residues 350–372, 378–401, 407–430, 436–459, 465–487, 493–515, 521–544, 550–572, and 578–600; these read FTCS…MVSH, YKCS…IKLH, HACP…AFKH, FVCE…KAKH, HVCE…LRTH, FQCH…NRTH, FSCE…ASRH, HFCQ…VRRH, and FECT…MEIH. Residues cysteine 552, cysteine 555, histidine 568, cysteine 580, cysteine 583, histidine 596, and histidine 600 each contribute to the Zn(2+) site.

The protein belongs to the krueppel C2H2-type zinc-finger protein family. As to quaternary structure, interacts with EP300. Detected in adrenal gland and neuroblastoma.

It is found in the nucleus. Its subcellular location is the chromosome. The protein localises to the telomere. Functionally, plays a critical role in transcriptional regulation and chromatin remodeling. Acts as a regulator of telomere length. Directly binds the telomeric double-stranded 5'-TTAGGG-3' repeat. Preferentially binds to telomeres that have a low concentration of shelterin complex and acts as a regulator of telomere length by initiating telomere trimming, a process that prevents the accumulation of aberrantly long telomeres. Also acts as a transcription regulator that binds to promoter regions. Regulates expression of a small subset of genes, including MTFP1. Acts as a negative regulator of cell proliferation by specifically activating expression of ARF, a tumor suppressor isoform of CDKN2A. Acts as a transcription regulator of CIITA, the major factor regulating MHC class II gene expression. In addition, regulates cellular m6A/m6Am methylation on RNA by facilitating the recruitment of the RNA demethylase, FTO, to target mRNAs. In Homo sapiens (Human), this protein is Zinc finger and BTB domain-containing protein 48.